Reading from the N-terminus, the 157-residue chain is Ribosome maturation factor RimM (157 aa).

The region spanning 89–156 is the PRC barrel domain; that stretch reads PGEYYHVDLI…DRLLIDPEFV (68 aa).

It belongs to the RimM family. Binds ribosomal protein uS19.

It is found in the cytoplasm. In terms of biological role, an accessory protein needed during the final step in the assembly of 30S ribosomal subunit, possibly for assembly of the head region. Essential for efficient processing of 16S rRNA. May be needed both before and after RbfA during the maturation of 16S rRNA. It has affinity for free ribosomal 30S subunits but not for 70S ribosomes. The polypeptide is Ribosome maturation factor RimM (Rhizorhabdus wittichii (strain DSM 6014 / CCUG 31198 / JCM 15750 / NBRC 105917 / EY 4224 / RW1) (Sphingomonas wittichii)).